The sequence spans 96 residues: Integration host factor subunit beta (96 aa).

The protein belongs to the bacterial histone-like protein family. As to quaternary structure, heterodimer of an alpha and a beta chain.

Functionally, this protein is one of the two subunits of integration host factor, a specific DNA-binding protein that functions in genetic recombination as well as in transcriptional and translational control. This is Integration host factor subunit beta from Methylocella silvestris (strain DSM 15510 / CIP 108128 / LMG 27833 / NCIMB 13906 / BL2).